The primary structure comprises 428 residues: UPF0597 protein BF3560 (428 aa).

Belongs to the UPF0597 family.

This Bacteroides fragilis (strain ATCC 25285 / DSM 2151 / CCUG 4856 / JCM 11019 / LMG 10263 / NCTC 9343 / Onslow / VPI 2553 / EN-2) protein is UPF0597 protein BF3560.